A 269-amino-acid chain; its full sequence is Glutamate racemase (269 aa).

Substrate contacts are provided by residues 14 to 15 and 46 to 47; these read DS and YS. Residue C78 is the Proton donor/acceptor of the active site. 79–80 contacts substrate; it reads NT. The active-site Proton donor/acceptor is C189. Residue 190-191 participates in substrate binding; the sequence is TH.

The protein belongs to the aspartate/glutamate racemases family.

It catalyses the reaction L-glutamate = D-glutamate. Its pathway is cell wall biogenesis; peptidoglycan biosynthesis. Provides the (R)-glutamate required for cell wall biosynthesis. The polypeptide is Glutamate racemase (Haemophilus influenzae (strain ATCC 51907 / DSM 11121 / KW20 / Rd)).